A 513-amino-acid polypeptide reads, in one-letter code: Nitrate transporter 2.2 (513 aa).

The next 12 membrane-spanning stretches (helical) occupy residues 38–58 (WICF…APVI), 74–94 (VSAV…VDVV), 98–118 (YGAA…ALVT), 128–148 (FFIG…GTMF), 158–178 (AIAA…MPLI), 196–216 (AFFV…LLGI), 247–265 (LGNY…SFGV), 281–301 (FGLN…MNIF), 323–343 (LWVL…MGKV), 351–371 (IVIM…HFGI), 383–403 (VSGL…AIWF), and 419–439 (FVWM…IWFP).

Belongs to the major facilitator superfamily. Nitrate/nitrite porter (TC 2.A.1.8) family.

The protein resides in the cell membrane. In terms of biological role, involved in nitrate transport, but does not seem to be able to mediate transport by its own. Acts as a dual component transporter with NAR2 (system 2). Involved in a high affinity transport specific for nitrate. The polypeptide is Nitrate transporter 2.2 (Chlamydomonas reinhardtii (Chlamydomonas smithii)).